A 426-amino-acid chain; its full sequence is MHDIRAIRETPELYEKAWAAKGSPGKVAEILKLDEALRAAQTALQAAQAERNEASKKIGQAKAQKDEAEATRLMAHVETLKKALEEQGEVERSAGEALRALLAGLPNIPAAEVPDGADEHDNVEVRRWGEPRAIAAPKDHATLGEAMGLMDFEAAARMSGARFVVLKGQLARLERALGQFMLDLQTQEHGYTEVNPPLLVNDAAAYGTDKLPKFAEDLFQTTDGRWLIPTAEVPLTSLVMGQIVAEEELPLRYTALTPCFRSEAGASGRDTRGMIRQHQFNKVELVSITTPEQSADEHERMVGCAEAVLKRLELPFRTMLLCRGDMGFGARKTYDLEVWLPSQEKYREISSCSNTGDFQARRMDARAKKAGEKGTRYVHTLNGSGLAVGRTLVAVLENYQDEGGRIAIPEALRPYMPGMTHIGGAA.

Position 230–232 (230–232) interacts with L-serine; that stretch reads TAE. 261–263 is an ATP binding site; it reads RSE. An L-serine-binding site is contributed by glutamate 284. 348–351 lines the ATP pocket; that stretch reads EISS. L-serine is bound at residue serine 384.

This sequence belongs to the class-II aminoacyl-tRNA synthetase family. Type-1 seryl-tRNA synthetase subfamily. In terms of assembly, homodimer. The tRNA molecule binds across the dimer.

The protein localises to the cytoplasm. The catalysed reaction is tRNA(Ser) + L-serine + ATP = L-seryl-tRNA(Ser) + AMP + diphosphate + H(+). The enzyme catalyses tRNA(Sec) + L-serine + ATP = L-seryl-tRNA(Sec) + AMP + diphosphate + H(+). It functions in the pathway aminoacyl-tRNA biosynthesis; selenocysteinyl-tRNA(Sec) biosynthesis; L-seryl-tRNA(Sec) from L-serine and tRNA(Sec): step 1/1. In terms of biological role, catalyzes the attachment of serine to tRNA(Ser). Is also able to aminoacylate tRNA(Sec) with serine, to form the misacylated tRNA L-seryl-tRNA(Sec), which will be further converted into selenocysteinyl-tRNA(Sec). In Phenylobacterium zucineum (strain HLK1), this protein is Serine--tRNA ligase.